A 519-amino-acid polypeptide reads, in one-letter code: Alkaline phosphatase, tissue-nonspecific isozyme (519 aa).

A signal peptide spans 1 to 16 (MKAFLLTLLAQLCSAS). Aspartate 59 serves as a coordination point for Mg(2+). Residues aspartate 59 and serine 109 each contribute to the Zn(2+) site. Catalysis depends on serine 109, which acts as the Phosphoserine intermediate. The cysteines at positions 138 and 200 are disulfide-linked. Asparagine 139 is a glycosylation site (N-linked (GlcNAc...) asparagine). Threonine 172 provides a ligand contact to Mg(2+). The N-linked (GlcNAc...) asparagine glycan is linked to asparagine 229. Glutamate 234 is a binding site for Ca(2+). Asparagine 278 carries an N-linked (GlcNAc...) asparagine glycan. Phenylalanine 289 and glutamate 290 together coordinate Ca(2+). An N-linked (GlcNAc...) asparagine glycan is attached at asparagine 302. Ca(2+) is bound at residue aspartate 305. Glutamate 331 contributes to the Mg(2+) binding site. Positions 336, 340, 377, and 378 each coordinate Zn(2+). A glycan (N-linked (GlcNAc...) asparagine) is linked at asparagine 429. Residue histidine 453 participates in Zn(2+) binding. Residues cysteine 488 and cysteine 496 are joined by a disulfide bond. Residue serine 498 is the site of GPI-anchor amidated serine attachment. A propeptide spans 499 to 519 (AARPAATATLLPVLLLLLLLC) (removed in mature form).

This sequence belongs to the alkaline phosphatase family. As to quaternary structure, homodimer. Requires Mg(2+) as cofactor. Zn(2+) serves as cofactor. It depends on Ca(2+) as a cofactor.

Its subcellular location is the cell membrane. The protein resides in the extracellular vesicle membrane. The catalysed reaction is a phosphate monoester + H2O = an alcohol + phosphate. It catalyses the reaction diphosphate + H2O = 2 phosphate + H(+). It carries out the reaction pyridoxal 5'-phosphate + H2O = pyridoxal + phosphate. The enzyme catalyses phosphoethanolamine + H2O = ethanolamine + phosphate. The catalysed reaction is ATP + H2O = ADP + phosphate + H(+). It catalyses the reaction ADP + H2O = AMP + phosphate + H(+). It carries out the reaction AMP + H2O = adenosine + phosphate. Functionally, alkaline phosphatase that metabolizes various phosphate compounds and plays a key role in skeletal mineralization and adaptive thermogenesis. Has broad substrate specificity and can hydrolyze a considerable variety of compounds: however, only a few substrates, such as diphosphate (inorganic pyrophosphate; PPi) and pyridoxal 5'-phosphate (PLP) are natural substrates. Plays an essential role in skeletal and dental mineralization via its ability to hydrolyze extracellular diphosphate, a potent mineralization inhibitor, to phosphate: it thereby promotes hydroxyapatite crystal formation and increases inorganic phosphate concentration. Catalyzes dephosphorylation of PLP to pyridoxal (PL), the transportable form of vitamin B6, in order to provide a sufficient amount of PLP in the brain, an essential cofactor for enzymes catalyzing the synthesis of diverse neurotransmitters. Additionally, also able to mediate ATP degradation in a stepwise manner to adenosine, thereby regulating the availability of ligands for purinergic receptors. Involved in the establishment and growth of feather germs. This is Alkaline phosphatase, tissue-nonspecific isozyme (ALPL) from Gallus gallus (Chicken).